A 451-amino-acid chain; its full sequence is Macrophage scavenger receptor types I and II (451 aa).

Residues 1 to 50 (MEQWDHFHNQQEDTDSCSESVKFDARSMTALLPPNPKNSPSLQEKLKSFK) lie on the Cytoplasmic side of the membrane. Phosphoserine is present on S27. Residues 51 to 76 (AALIALYLLVFAVLIPLIGIVAAQLL) traverse the membrane as a helical; Signal-anchor for type II membrane protein segment. The tract at residues 77–109 (KWETKNCSVSSTNANDITQSLTGKGNDSEEEMR) is spacer. Residues 77–451 (KWETKNCSVS…SEDAGVTCTL (375 aa)) lie on the Extracellular side of the membrane. N-linked (GlcNAc...) asparagine glycans are attached at residues N82, N102, N143, N184, N221, N249, and N267. A coiled-coil region spans residues 171 to 255 (NAIDEISKSL…VLNNITNDLR (85 aa)). The disordered stretch occupies residues 267–346 (NITLIQGPPG…EKGSGNTLTP (80 aa)). The Collagen-like domain maps to 273 to 341 (GPPGPPGEKG…KGQKGEKGSG (69 aa)). The SRCR domain maps to 350–450 (VRLVGGSGPH…HSEDAGVTCT (101 aa)). Intrachain disulfides connect C375/C439, C388/C449, and C419/C429.

As to quaternary structure, homotrimer. Interacts with MYO18A. Isoform I, isoform II and isoform III are expressed in monocyte-derived macrophages. Isoform I and isoform II are expressed in the liver, placenta and brain.

It localises to the membrane. In terms of biological role, membrane glycoproteins implicated in the pathologic deposition of cholesterol in arterial walls during atherogenesis. Two types of receptor subunits exist. These receptors mediate the endocytosis of a diverse group of macromolecules, including modified low density lipoproteins (LDL). Isoform III does not internalize acetylated LDL. The polypeptide is Macrophage scavenger receptor types I and II (MSR1) (Homo sapiens (Human)).